A 327-amino-acid polypeptide reads, in one-letter code: D-alanine--D-alanine ligase (327 aa).

Residues 113 to 312 enclose the ATP-grasp domain; the sequence is KRLWMTHDLS…YEDFVMQVVA (200 aa). 139–194 provides a ligand contact to ATP; sequence VADLGLPLIVKPAREGSSIGLSKVTDASQMREAFEKAAALDNDVIAETFIDGAELT. Mg(2+) is bound by residues aspartate 266, glutamate 279, and asparagine 281.

It belongs to the D-alanine--D-alanine ligase family. It depends on Mg(2+) as a cofactor. Mn(2+) is required as a cofactor.

The protein resides in the cytoplasm. It catalyses the reaction 2 D-alanine + ATP = D-alanyl-D-alanine + ADP + phosphate + H(+). It participates in cell wall biogenesis; peptidoglycan biosynthesis. In terms of biological role, cell wall formation. This Cupriavidus pinatubonensis (strain JMP 134 / LMG 1197) (Cupriavidus necator (strain JMP 134)) protein is D-alanine--D-alanine ligase.